Reading from the N-terminus, the 357-residue chain is Alpha-2-macroglobulin receptor-associated protein (357 aa).

The first 34 residues, 1–34, serve as a signal peptide directing secretion; sequence MAPRRVRSFLRGLPALLLLLLFLGPWPAASHGGK. Positions 32–52 are disordered; sequence GGKYSREKNQPKPSPKRESGE. Over residues 35-52 the composition is skewed to basic and acidic residues; the sequence is YSREKNQPKPSPKRESGE. Ser-50 and Ser-135 each carry phosphoserine. Residues 219-310 adopt a coiled-coil conformation; it reads SRHTELKEKL…AHEKLRHAES (92 aa). Positions 237–353 are LDL receptor binding; the sequence is RLRRVSHQGY…DLSGRISRAR (117 aa). The residue at position 248 (Thr-248) is a Phosphothreonine. Asn-268 carries an N-linked (GlcNAc...) asparagine glycan. Residues 354–357 carry the Prevents secretion from ER motif; it reads HNEL.

Belongs to the alpha-2-MRAP family. In terms of assembly, interacts with the LRP1/alpha-2-macroglobulin receptor heavy and light chains; the interaction is transient and coincides with a reduction of ligand binding by the receptor. Interacts with LRP2/glycoprotein 330. Interacts with LRP1B; binding is followed by internalization and degradation. Interacts with LDLR. Interacts with SORL1. Interacts with LRP1; this interaction is followed by rapid internalization. In terms of processing, N-glycosylated.

Its subcellular location is the rough endoplasmic reticulum lumen. The protein resides in the endoplasmic reticulum-Golgi intermediate compartment lumen. It is found in the golgi apparatus. The protein localises to the cis-Golgi network. It localises to the golgi apparatus lumen. Its subcellular location is the endosome lumen. The protein resides in the cell surface. Molecular chaperone for LDL receptor-related proteins that may regulate their ligand binding activity along the secretory pathway. The chain is Alpha-2-macroglobulin receptor-associated protein from Homo sapiens (Human).